Consider the following 433-residue polypeptide: 3-phosphoshikimate 1-carboxyvinyltransferase (433 aa).

Positions 21, 22, and 26 each coordinate 3-phosphoshikimate. A phosphoenolpyruvate-binding site is contributed by lysine 21. Glycine 92 and arginine 120 together coordinate phosphoenolpyruvate. Serine 166, glutamine 168, aspartate 317, and lysine 344 together coordinate 3-phosphoshikimate. Glutamine 168 lines the phosphoenolpyruvate pocket. The active-site Proton acceptor is the aspartate 317. Phosphoenolpyruvate is bound by residues arginine 348 and arginine 391.

Belongs to the EPSP synthase family. As to quaternary structure, monomer.

The protein resides in the cytoplasm. The catalysed reaction is 3-phosphoshikimate + phosphoenolpyruvate = 5-O-(1-carboxyvinyl)-3-phosphoshikimate + phosphate. It functions in the pathway metabolic intermediate biosynthesis; chorismate biosynthesis; chorismate from D-erythrose 4-phosphate and phosphoenolpyruvate: step 6/7. In terms of biological role, catalyzes the transfer of the enolpyruvyl moiety of phosphoenolpyruvate (PEP) to the 5-hydroxyl of shikimate-3-phosphate (S3P) to produce enolpyruvyl shikimate-3-phosphate and inorganic phosphate. The polypeptide is 3-phosphoshikimate 1-carboxyvinyltransferase (Caldicellulosiruptor bescii (strain ATCC BAA-1888 / DSM 6725 / KCTC 15123 / Z-1320) (Anaerocellum thermophilum)).